Consider the following 467-residue polypeptide: Asparagine--tRNA ligase (467 aa).

This sequence belongs to the class-II aminoacyl-tRNA synthetase family. In terms of assembly, homodimer.

The protein localises to the cytoplasm. It catalyses the reaction tRNA(Asn) + L-asparagine + ATP = L-asparaginyl-tRNA(Asn) + AMP + diphosphate + H(+). This is Asparagine--tRNA ligase from Phocaeicola vulgatus (strain ATCC 8482 / DSM 1447 / JCM 5826 / CCUG 4940 / NBRC 14291 / NCTC 11154) (Bacteroides vulgatus).